A 469-amino-acid chain; its full sequence is Citrate synthase, mitochondrial (469 aa).

Residues 1–28 constitute a mitochondrion transit peptide; the sequence is MAFFRTVTKLRSRLGQPPSLRDSVRCLQ. Catalysis depends on residues His-304, His-350, and Asp-405.

This sequence belongs to the citrate synthase family. Homodimer.

The protein localises to the mitochondrion matrix. It catalyses the reaction oxaloacetate + acetyl-CoA + H2O = citrate + CoA + H(+). Its pathway is carbohydrate metabolism; tricarboxylic acid cycle; isocitrate from oxaloacetate: step 1/2. In Fragaria ananassa (Strawberry), this protein is Citrate synthase, mitochondrial (MCSI).